The sequence spans 352 residues: Aliphatic aldoxime dehydratase (352 aa).

Residue serine 219 participates in an aliphatic aldoxime binding. Residue histidine 299 coordinates heme b. Histidine 320 is an an aliphatic aldoxime binding site. The active site involves histidine 320.

The protein belongs to the heme-containing dehydratase family. In terms of assembly, homodimer. Heme b is required as a cofactor. The cofactor is Ca(2+).

It catalyses the reaction an aliphatic aldoxime = a nitrile + H2O. Active when the heme iron is in the ferrous state. Is very sensitive to AgNO(3), is also inhibited by hydroxylamine and phenylhydrazine, and hardly inhibited by thiol reagents. Not sensitive to chelating agents and serine-modifying reagents. In terms of biological role, catalyzes the dehydration of aldoximes to their corresponding nitrile. Aliphatic aldoximes are more effective substrates than aromatic aldoximes. Shows high activity with butyraldoxime and acetaldoxime, but only weak activity with the aromatic aldoxime pyridine-2-aldoxime. Cannot use benzaldoxime, isonitrosoacetophenone and pyridine-4-aldoxime. Is involved in the metabolism of aldoxime in vivo. This Pseudomonas chlororaphis (Pseudomonas aureofaciens) protein is Aliphatic aldoxime dehydratase.